The following is a 211-amino-acid chain: Peptide methionine sulfoxide reductase MsrA (211 aa).

The active site involves Cys-52.

This sequence belongs to the MsrA Met sulfoxide reductase family.

The catalysed reaction is L-methionyl-[protein] + [thioredoxin]-disulfide + H2O = L-methionyl-(S)-S-oxide-[protein] + [thioredoxin]-dithiol. It catalyses the reaction [thioredoxin]-disulfide + L-methionine + H2O = L-methionine (S)-S-oxide + [thioredoxin]-dithiol. Functionally, has an important function as a repair enzyme for proteins that have been inactivated by oxidation. Catalyzes the reversible oxidation-reduction of methionine sulfoxide in proteins to methionine. The sequence is that of Peptide methionine sulfoxide reductase MsrA from Klebsiella pneumoniae (strain 342).